Consider the following 126-residue polypeptide: Protein Wnt-1 (126 aa).

A lipid anchor (O-palmitoleoyl serine; by PORCN) is attached at serine 1. A disulfide bridge connects residues cysteine 92 and cysteine 107. 2 N-linked (GlcNAc...) asparagine glycosylation sites follow: asparagine 93 and asparagine 123.

This sequence belongs to the Wnt family. Post-translationally, palmitoleoylation is required for efficient binding to frizzled receptors. Palmitoleoylation is necessary for proper trafficking to cell surface. Depalmitoleoylated by NOTUM, leading to inhibit Wnt signaling pathway.

The protein localises to the secreted. It localises to the extracellular space. Its subcellular location is the extracellular matrix. Its function is as follows. Ligand for members of the frizzled family of seven transmembrane receptors. Acts in the canonical Wnt signaling pathway by promoting beta-catenin-dependent transcriptional activation. Plays an essential role in the development of the embryonic brain and central nervous system (CNS). Has a role in osteoblast function, bone development and bone homeostasis. This is Protein Wnt-1 (WNT-1) from Sceloporus occidentalis (Western fence lizard).